Here is a 569-residue protein sequence, read N- to C-terminus: uncharacterized protein (569 aa).

An N-terminal signal peptide occupies residues 1–24; the sequence is MKFQRKYWGLLSTLGVSSAVALSA. C25 carries N-palmitoyl cysteine lipidation. C25 carries S-diacylglycerol cysteine lipidation. Disordered stretches follow at residues 111–137 and 242–267; these read SNMK…EWEV and GKNG…KKIE. Low complexity-rich tracts occupy residues 119 to 130 and 249 to 260; these read SSSSSSTGNNGS and KKMTTDSSSTQQ.

This sequence to M.pneumoniae MPN_456 and M.genitalium MG321 N-terminal region.

Its subcellular location is the cell membrane. This is an uncharacterized protein from Mycoplasma pneumoniae (strain ATCC 29342 / M129 / Subtype 1) (Mycoplasmoides pneumoniae).